The primary structure comprises 160 residues: Ribosomal RNA large subunit methyltransferase H (160 aa).

2 residues coordinate S-adenosyl-L-methionine: Leu76 and Gly108.

The protein belongs to the RNA methyltransferase RlmH family. As to quaternary structure, homodimer.

It localises to the cytoplasm. The catalysed reaction is pseudouridine(1915) in 23S rRNA + S-adenosyl-L-methionine = N(3)-methylpseudouridine(1915) in 23S rRNA + S-adenosyl-L-homocysteine + H(+). Functionally, specifically methylates the pseudouridine at position 1915 (m3Psi1915) in 23S rRNA. The protein is Ribosomal RNA large subunit methyltransferase H of Xanthobacter autotrophicus (strain ATCC BAA-1158 / Py2).